The sequence spans 301 residues: (R)-2-haloacid dehalogenase (301 aa).

The protein belongs to the HAD-like hydrolase superfamily. S-2-haloalkanoic acid dehalogenase family. As to quaternary structure, homotetramer.

It carries out the reaction an (R)-2-haloacid + H2O = a (2S)-2-hydroxycarboxylate + a halide anion + H(+). Catalyzes the hydrolytic dehalogenation of small (R)-2-haloalkanoic acids to yield the corresponding (S)-2-hydroxyalkanoic acids. Acts on acids of short chain lengths, C(2) to C(4), with inversion of configuration at C-2. In Pseudomonas putida (Arthrobacter siderocapsulatus), this protein is (R)-2-haloacid dehalogenase (hadD).